Here is a 214-residue protein sequence, read N- to C-terminus: tRNA (guanine-N(7)-)-methyltransferase (214 aa).

4 residues coordinate S-adenosyl-L-methionine: glutamate 43, glutamate 68, asparagine 99, and aspartate 121. Aspartate 121 is a catalytic residue. Substrate contacts are provided by residues lysine 125, aspartate 157, and 194 to 197; that span reads TEYE.

The protein belongs to the class I-like SAM-binding methyltransferase superfamily. TrmB family.

The catalysed reaction is guanosine(46) in tRNA + S-adenosyl-L-methionine = N(7)-methylguanosine(46) in tRNA + S-adenosyl-L-homocysteine. It functions in the pathway tRNA modification; N(7)-methylguanine-tRNA biosynthesis. In terms of biological role, catalyzes the formation of N(7)-methylguanine at position 46 (m7G46) in tRNA. This is tRNA (guanine-N(7)-)-methyltransferase from Alkaliphilus metalliredigens (strain QYMF).